Consider the following 238-residue polypeptide: uncharacterized protein (238 aa).

A disordered region spans residues 219–238 (EESINNNVDDTDDIDNDNFI). Residues 227–238 (DDTDDIDNDNFI) are compositionally biased toward acidic residues.

This is an uncharacterized protein from Buchnera aphidicola subsp. Acyrthosiphon pisum (strain APS) (Acyrthosiphon pisum symbiotic bacterium).